The primary structure comprises 89 residues: uncharacterized protein (89 aa).

Residues 20–39 traverse the membrane as a helical segment; that stretch reads SFAMTTYLNLFVKLLIFLYI.

Its subcellular location is the membrane. This is an uncharacterized protein from Escherichia coli (strain K12).